The sequence spans 298 residues: Syntenin-1 (298 aa).

Serine 2 carries the N-acetylserine modification. Residues 2–60 (SLYPSLEDLKVDKVIQAQTAFSANPANPAILSEASAPIPHDGNLYPRLYPELSQYMGLS) are interaction with PDCD6IP. 3 consecutive short sequence motifs (LYPX(n)L motif) follow at residues 3 to 7 (LYPSL), 45 to 49 (LYPRL), and 49 to 53 (LYPEL). Serine 6 bears the Phosphoserine mark. Tyrosine 46 is subject to Phosphotyrosine. PDZ domains follow at residues 114 to 193 (EVIL…IRDR) and 198 to 273 (TITM…MPAF). Residues asparagine 215 and 250-251 (KD) contribute to the a 1,2-diacyl-sn-glycero-3-phospho-(1D-myo-inositol-4,5-bisphosphate) site.

As to quaternary structure, monomer and homodimer. Interacts with SDC1, SDC2, SDC3, SDC4, NRXN2, EPHA7, EPHB1, NF2 isoform 1, TGFA and IL5RA. Interacts with NFASC and PTPRJ. Interacts with SDCBP2. Interacts with PDCD6IP. Forms a complex with PDCD6IP and SDC2. Interacts (via C-terminus) with TGFBR1. Binds to FZD7; this interaction is increased by inositol trisphosphate (IP3). Interacts with SMO. In terms of processing, phosphorylated on tyrosine residues. As to expression, expressed in lung cancers, including adenocarcinoma, squamous cell carcinoma and small-cell carcinoma (at protein level). Widely expressed. Expressed in fetal kidney, liver, lung and brain. In adult highest expression in heart and placenta.

It is found in the cell junction. The protein resides in the focal adhesion. Its subcellular location is the adherens junction. The protein localises to the cell membrane. It localises to the endoplasmic reticulum membrane. It is found in the nucleus. The protein resides in the melanosome. Its subcellular location is the cytoplasm. The protein localises to the cytosol. It localises to the cytoskeleton. It is found in the secreted. The protein resides in the extracellular exosome. Its subcellular location is the membrane raft. Functionally, multifunctional adapter protein involved in diverse array of functions including trafficking of transmembrane proteins, neuro and immunomodulation, exosome biogenesis, and tumorigenesis. Positively regulates TGFB1-mediated SMAD2/3 activation and TGFB1-induced epithelial-to-mesenchymal transition (EMT) and cell migration in various cell types. May increase TGFB1 signaling by enhancing cell-surface expression of TGFR1 by preventing the interaction between TGFR1 and CAV1 and subsequent CAV1-dependent internalization and degradation of TGFR1. In concert with SDC1/4 and PDCD6IP, regulates exosome biogenesis. Regulates migration, growth, proliferation, and cell cycle progression in a variety of cancer types. In adherens junctions may function to couple syndecans to cytoskeletal proteins or signaling components. Seems to couple transcription factor SOX4 to the IL-5 receptor (IL5RA). May also play a role in vesicular trafficking. Seems to be required for the targeting of TGFA to the cell surface in the early secretory pathway. This Homo sapiens (Human) protein is Syntenin-1 (SDCBP).